The sequence spans 168 residues: MSEKAIAVKAQHVEDVVEKFNNATSAIVVDYRGLTVEQVTDLRKQLREAGVQMNVIKNKILTRAAEKAGYGDLNDVFAGPTAVAFSNEDPIAPAKVLKKFADSVDALEIKGGYIEGNIVSIDEINVYATLPSREELLATLASQLQAPVRNVAYAIKAIVDKGDEGDAA.

The protein belongs to the universal ribosomal protein uL10 family. Part of the ribosomal stalk of the 50S ribosomal subunit. The N-terminus interacts with L11 and the large rRNA to form the base of the stalk. The C-terminus forms an elongated spine to which L12 dimers bind in a sequential fashion forming a multimeric L10(L12)X complex.

Functionally, forms part of the ribosomal stalk, playing a central role in the interaction of the ribosome with GTP-bound translation factors. The polypeptide is Large ribosomal subunit protein uL10 (Levilactobacillus brevis (strain ATCC 367 / BCRC 12310 / CIP 105137 / JCM 1170 / LMG 11437 / NCIMB 947 / NCTC 947) (Lactobacillus brevis)).